We begin with the raw amino-acid sequence, 70 residues long: Gas vesicle protein A (70 aa).

Belongs to the gas vesicle GvpA family. The gas vesicle shell is 2 nm thick and consists of a single layer of this protein. It forms helical ribs nearly perpendicular to the long axis of the vesicle.

The protein resides in the gas vesicle shell. In terms of biological role, gas vesicles are hollow, gas filled proteinaceous nanostructures found in some microorganisms. During planktonic growth they allow positioning of the organism at a favorable depth for light or nutrient acquisition. GvpA forms the protein shell. The polypeptide is Gas vesicle protein A (Ancylobacter aquaticus).